A 1887-amino-acid polypeptide reads, in one-letter code: MVVASEIAKVASKTARDIAGCFTCQCGTQFDNVERIVQHFKECRYRDETCKDDDIVVYEPSSFVQDEKKDKPIIVEAASEATSEEACNSSKERQLPALSALSALSTLTTSANDDLWTARLIWQSTNDTKLDNSPSSNYTDLNHKLANYGLSILSIHALMCVECECLLNVIHTAQHMQIVHKLELNEDLLWFQELRTLKLKSPTNVLQTHSSQTHVYPYIRGLPVLLNGYECVPCTKNGTGFVHAIMDTFRHHVRRTHGKVIKLENCIRRTALQTVKNKYAQRCQFFKVDYVPLNGGEEEEEEEGEEKEDAQNIKERMVDFCFSKFMEKNQQRREQQDKGENKKRQDDVDQATDNNTNTILEDDEKDNDEEEEEEIVNAREKNLLNQQFNWTAIVKKLGENWDQLVRFEYTNGIVTLDTIVNQLIRYYYRGFRHLSGMTMGMRRMFTQGGSYSAQERGLCRLEQKDTVVRYAQSAALYLIFLLRRPSADSGIRRHLEAMCGATVERKEGGSNSSSNISNVANFDSAEDDNDNDNDNDRDSNNNNNNNNTNTDDDDKLAYLELHEALKLAFLQQYDFSKNVQDLEIMEFLACMSLHKDGTSKYAYEISACFAPLIYTCRLVAACELQRLIDEKQIDLLSIPSFQTAGSIAYAHVFCFITLGQRNLYDVLYETQKVVRDIIRTEGYANTLQGLSPSTVLFQPRSNSMYPCIGDAFNNMVRLDLSELTALYEGMFAKVQDLLKELCFDMNVEKLLPISLLRSIGDDINNSKLGYSFFKESIEIRSSHSVLLRTILKNSELCHRFFPSMSKKDLTKLFGGVSDQQRNECDNYSNHYNDNSNDNDNDVFLKLHWSKSAIKKYETKASIFNELLFCLVYISAGQPARAQEMVYWTLRNGKYKTRELYLMFGRLMIYSRYDKTRNMKFAEKPIPRFLSEPLSILALRYYVLVRPLEALMKYVTTADRSKVAVYLDFMFVIAGERLQRDLPYRIFPKATYQCIQKPLGFRNYRHIAHYFKEKNIEEEMTRESYFDLQAGHTRNTALYIYGRTMDNLHYLPSDYFANFFRASYKWQELLQIRDNPTHGLLVETKHPFIKRVDQLEEALNEKLARLVGEQMVEGDKEKDKTNEEKNKDEVKAEMTQPVVNQDSHDLQDQLATTPTAPTAFHYRPGLLQPSQTSVQHCCWALSQYYGLEAKFRSLKQFQSVYFSLLNRMNLITVLPTGGGKSLSFLIPALIEKKRQTPGKVMNMVTLVLVPMMSLRQDMMLRVNEKGLLVCSGNWTAFKDVRLTLETQLPDLFILTYESALTNSGLRFFESLATLGRLARVVIDEAHLLLTSGAWRTALSRASRLSGLYAPLHLLSATFPRQLEMVARQTFCTNFYVLRETSTARENIFYFLHPYDNTEFLLDLRTLMKRTKVFEGDGRAIIFCRTKKDVEYIHRRLHQSDLFAHTHVTIYTGDVSDEERQMNFDAFRNANGKTRIMIATKAFGLGINYMGVRLVVHYGLPASSMDYVQETGRAGRDGKYAIAALFYEKYDSTWSSYVEDSMKNFLNDNTMCVRSFLASEMDGECVCCASFANCVYCSRCSDSLLGEESTVSTMYGVKPTLPETPKPAIATHSRYNASFSSSPPPQPGNSSGMSAMNTNTTSTTPVSLSELSEITLFPSSVSPTWKKSFGNANTNLKYGLEDMSLSHRRGHKRTYDEHLNNVQQGVNHDMNRVHGSVGGMSGIVGIGIGIGDGDGDGDVDSRTIHFAEYKSRVQAVKKQWVDSTDISAQLERFFRVYKDECLSCTLGNPDTEIRAHTGKACPVRLSTCYKCGKADHNLRECKLRIRFQGLCLFCGLTKFEHADSDMAYTSDCRSWARKANLISLVYYAWNNVQYRRTIADKFLQGDVRD.

Residues 329–347 show a composition bias toward basic and acidic residues; that stretch reads NQQRREQQDKGENKKRQDD. 3 disordered regions span residues 329–372, 504–552, and 1110–1135; these read NQQR…EEEE, ERKE…NTDD, and MVEGDKEKDKTNEEKNKDEVKAEMTQ. Composition is skewed to acidic residues over residues 360 to 372 and 524 to 533; these read LEDDEKDNDEEEE and SAEDDNDNDN. Positions 540-549 are enriched in low complexity; the sequence is NNNNNNNNTN. The span at 1112 to 1131 shows a compositional bias: basic and acidic residues; that stretch reads EGDKEKDKTNEEKNKDEVKA. Residues 1200 to 1375 enclose the Helicase ATP-binding domain; that stretch reads YFSLLNRMNL…RQTFCTNFYV (176 aa). Residues 1213–1220 and 1240–1247 contribute to the ATP site; these read LPTGGGKS and MNMVTLVL. The DEAH box motif lies at 1322 to 1325; the sequence is DEAH. A Helicase C-terminal domain is found at 1401–1559; it reads DLRTLMKRTK…CVRSFLASEM (159 aa). Residues 1613–1643 are disordered; that stretch reads YNASFSSSPPPQPGNSSGMSAMNTNTTSTTP. Residues 1626-1642 show a composition bias toward low complexity; the sequence is GNSSGMSAMNTNTTSTT. Residues 1804–1821 form a CCHC-type zinc finger; sequence STCYKCGKADHNLRECKL.

The protein belongs to the helicase family. RecQ subfamily.

It carries out the reaction Couples ATP hydrolysis with the unwinding of duplex DNA by translocating in the 3'-5' direction.. It catalyses the reaction ATP + H2O = ADP + phosphate + H(+). Functionally, a probable ATP-dependent 3'-5' DNA helicase. Has a role in telomerase-independent telomere maintenance. The polypeptide is ATP-dependent DNA helicase tlh1 (Schizosaccharomyces pombe (strain 972 / ATCC 24843) (Fission yeast)).